The primary structure comprises 169 residues: Ribosome maturation factor RimM (169 aa).

Residues P97–F169 enclose the PRC barrel domain.

This sequence belongs to the RimM family. In terms of assembly, binds ribosomal protein uS19.

It is found in the cytoplasm. An accessory protein needed during the final step in the assembly of 30S ribosomal subunit, possibly for assembly of the head region. Essential for efficient processing of 16S rRNA. May be needed both before and after RbfA during the maturation of 16S rRNA. It has affinity for free ribosomal 30S subunits but not for 70S ribosomes. This chain is Ribosome maturation factor RimM, found in Legionella pneumophila subsp. pneumophila (strain Philadelphia 1 / ATCC 33152 / DSM 7513).